The following is a 353-amino-acid chain: uncharacterized protein (353 aa).

Positions 1 to 20 (MLMRSVCFILLAVLLFSLSA) are cleaved as a signal peptide. Residue Cys-21 is the site of N-palmitoyl cysteine attachment. Cys-21 is lipidated: S-diacylglycerol cysteine.

The protein resides in the cell membrane. This is an uncharacterized protein from Bacillus subtilis (strain 168).